Reading from the N-terminus, the 319-residue chain is ATP-dependent 6-phosphofructokinase (319 aa).

Gly-11 is a binding site for ATP. An ADP-binding site is contributed by 21–25 (RAVVR). Residues 72–73 (RS) and 102–105 (GDGS) contribute to the ATP site. Asp-103 is a binding site for Mg(2+). 125-127 (TID) lines the substrate pocket. The active-site Proton acceptor is the Asp-127. ADP is bound at residue Arg-154. Substrate contacts are provided by residues Arg-162 and 169–171 (MGR). ADP contacts are provided by residues 185–187 (GAE), Arg-211, and 213–215 (KKH). Residues Glu-222, Arg-243, and 249–252 (HIQR) contribute to the substrate site.

Belongs to the phosphofructokinase type A (PFKA) family. ATP-dependent PFK group I subfamily. Prokaryotic clade 'B1' sub-subfamily. Homotetramer. Mg(2+) serves as cofactor.

It localises to the cytoplasm. The enzyme catalyses beta-D-fructose 6-phosphate + ATP = beta-D-fructose 1,6-bisphosphate + ADP + H(+). Its pathway is carbohydrate degradation; glycolysis; D-glyceraldehyde 3-phosphate and glycerone phosphate from D-glucose: step 3/4. With respect to regulation, allosterically activated by ADP and other diphosphonucleosides, and allosterically inhibited by phosphoenolpyruvate. Catalyzes the phosphorylation of D-fructose 6-phosphate to fructose 1,6-bisphosphate by ATP, the first committing step of glycolysis. The sequence is that of ATP-dependent 6-phosphofructokinase from Oceanobacillus iheyensis (strain DSM 14371 / CIP 107618 / JCM 11309 / KCTC 3954 / HTE831).